Reading from the N-terminus, the 156-residue chain is Sensor histidine kinase component HK2 (156 aa).

Over 1–42 (MALVLAAAGAVTVVQFRDAAHEADPDGALRGLTDDITADLVR) the chain is Extracellular. A helical transmembrane segment spans residues 43–63 (ELVTILPIVLVIAAVAAYLLS). Residues 64-120 (RAALRPVDRIRAAAQTLTTTPHPDTDAPLPVPPTDDEIAWLATTLNTMLTRLQRALA) form the HAMP domain. The Cytoplasmic portion of the chain corresponds to 64 to 156 (RAALRPVDRI…RCAGPDPPTS (93 aa)). The Histidine kinase; first part domain maps to 128–156 (DASHELRTPLALLTTELELRCAGPDPPTS). Position 131 is a phosphohistidine; by autocatalysis (His-131).

In terms of assembly, homodimer. Each monomer interacts with HK1 and the receiver domain of TcrA. Post-translationally, phosphorylated by HK1.

The protein localises to the cell membrane. It catalyses the reaction ATP + protein L-histidine = ADP + protein N-phospho-L-histidine.. Its function is as follows. Member of the three-protein two-component system HK1/HK2/TcrA. HK2 transfers its phosphoryl group to TcrA. The sequence is that of Sensor histidine kinase component HK2 from Mycobacterium tuberculosis (strain ATCC 25618 / H37Rv).